We begin with the raw amino-acid sequence, 425 residues long: MALKITGKAEGQLQLHLITKQKQFAVPDVPYSIRANVSTKELNVLVNTLLKDAGNAEAGKVEFDFLLNGEFPLGQHLKERDVSFEDTVELEYVERYPAPEPQDCLLHDDWVSAVEARDNWILTGCYDNTLNLWTTKGKHKLTIPGHIAPVKGVTWISLDEEKGVFASASQDQTVMLWEWNVAANSVECVQVCKGHERGVDCIAANGSKTKMATGSWDTMLKIWSTDVRSGGGDSEPSTSKRQKLDQGSARTPLMTLAGHRECISGVQWIDDNTLVTSSWDHTIKIWDLALNGIKSEISGNKSFFDLSYSKLNGLIITASPDKNLRLYDPKSNQGTLVKNTYLGHTQWVQSVRWSTTNEYLFVSGAYDNHVKLWDYRSPKAPIFELIGHEDKVLACDWSNPRFILSGGSDNSVRVFKSKIAIGGEK.

Positions 13–94 are ubiquitin-like (UBL) domain; it reads LQLHLITKQK…EDTVELEYVE (82 aa). 7 WD repeats span residues 106-143, 145-187, 194-233, 258-296, 298-337, 343-383, and 387-425; these read LHDDWVSAVEARDNWILTGCYDNTLNLWTTKGKHKLTI, GHIA…NSVE, GHERGVDCIAANGSKTKMATGSWDTMLKIWSTDVRSGGGD, GHRECISGVQWIDDNTLVTSSWDHTIKIWDLALNGIKSE, SGNKSFFDLSYSKLNGLIITASPDKNLRLYDPKSNQGTLV, GHTQ…APIF, and GHEDKVLACDWSNPRFILSGGSDNSVRVFKSKIAIGGEK. Positions 227-247 are disordered; the sequence is VRSGGGDSEPSTSKRQKLDQG.

The protein belongs to the WD repeat WDR12/YTM1 family.

The protein localises to the nucleus. It is found in the nucleolus. Its subcellular location is the nucleoplasm. Functionally, required for maturation of ribosomal RNAs and formation of the large ribosomal subunit. The protein is Ribosome biogenesis protein WDR12 homolog of Culex quinquefasciatus (Southern house mosquito).